We begin with the raw amino-acid sequence, 225 residues long: MTNIQALFERIAPLYDRLNDQLSFGLHHVWKQMAVDWLELPQGATALDLCCGTGDLTRLLARRVGRQGRVVGLDFAAAPLAIARQRSDHYPQIEWLQGDALAVPFAPQTFQGITIGYGLRNVVDIPQALREMFRLLVPGGRAAILDFSHPQTSALEQFQQWYLQQWVVPTARHYGLAAEYDYLWPSIQAFPTPPTLCALIQQAGFERVKHYPLLGGLMAITVAQK.

It belongs to the class I-like SAM-binding methyltransferase superfamily. MenG/UbiE family.

The catalysed reaction is demethylphylloquinol + S-adenosyl-L-methionine = phylloquinol + S-adenosyl-L-homocysteine + H(+). It functions in the pathway cofactor biosynthesis; phylloquinone biosynthesis. In terms of biological role, methyltransferase required for the conversion of 2-phytyl-1,4-beta-naphthoquinol to phylloquinol. This Thermosynechococcus vestitus (strain NIES-2133 / IAM M-273 / BP-1) protein is 2-phytyl-1,4-naphtoquinone methyltransferase.